Reading from the N-terminus, the 436-residue chain is Acetyl-CoA decarbonylase/synthase complex subunit delta 1 (436 aa).

It belongs to the CdhD family. In terms of assembly, heterodimer of delta and gamma chains. The ACDS complex is made up of alpha, epsilon, beta, gamma and delta chains with a probable stoichiometry of (alpha(2)epsilon(2))(4)-beta(8)-(gamma(1)delta(1))(8) (Potential).

Its pathway is one-carbon metabolism; methanogenesis from acetate. In terms of biological role, part of a complex that catalyzes the reversible cleavage of acetyl-CoA, allowing growth on acetate as sole source of carbon and energy. Probably maintains the overall quaternary structure of the ACDS complex. This Methanosarcina acetivorans (strain ATCC 35395 / DSM 2834 / JCM 12185 / C2A) protein is Acetyl-CoA decarbonylase/synthase complex subunit delta 1 (cdhD1).